The sequence spans 173 residues: Large ribosomal subunit protein uL10 (173 aa).

It belongs to the universal ribosomal protein uL10 family. Part of the ribosomal stalk of the 50S ribosomal subunit. The N-terminus interacts with L11 and the large rRNA to form the base of the stalk. The C-terminus forms an elongated spine to which L12 dimers bind in a sequential fashion forming a multimeric L10(L12)X complex.

Functionally, forms part of the ribosomal stalk, playing a central role in the interaction of the ribosome with GTP-bound translation factors. The polypeptide is Large ribosomal subunit protein uL10 (Micrococcus luteus (strain ATCC 4698 / DSM 20030 / JCM 1464 / CCM 169 / CCUG 5858 / IAM 1056 / NBRC 3333 / NCIMB 9278 / NCTC 2665 / VKM Ac-2230) (Micrococcus lysodeikticus)).